The primary structure comprises 544 residues: Chaperonin GroEL 3 (544 aa).

Residues 30 to 33 (TLGP), Lys51, 87 to 91 (DGTTT), Gly415, and Asp495 contribute to the ATP site.

Belongs to the chaperonin (HSP60) family. As to quaternary structure, forms a cylinder of 14 subunits composed of two heptameric rings stacked back-to-back. Interacts with the co-chaperonin GroES.

The protein resides in the cytoplasm. The catalysed reaction is ATP + H2O + a folded polypeptide = ADP + phosphate + an unfolded polypeptide.. Together with its co-chaperonin GroES, plays an essential role in assisting protein folding. The GroEL-GroES system forms a nano-cage that allows encapsulation of the non-native substrate proteins and provides a physical environment optimized to promote and accelerate protein folding. The sequence is that of Chaperonin GroEL 3 from Psychromonas ingrahamii (strain DSM 17664 / CCUG 51855 / 37).